Consider the following 638-residue polypeptide: 1,4-alpha-glucan branching enzyme GlgB (638 aa).

Aspartate 320 acts as the Nucleophile in catalysis. Glutamate 373 (proton donor) is an active-site residue.

The protein belongs to the glycosyl hydrolase 13 family. GlgB subfamily. Monomer.

The enzyme catalyses Transfers a segment of a (1-&gt;4)-alpha-D-glucan chain to a primary hydroxy group in a similar glucan chain.. It functions in the pathway glycan biosynthesis; glycogen biosynthesis. In terms of biological role, catalyzes the formation of the alpha-1,6-glucosidic linkages in glycogen by scission of a 1,4-alpha-linked oligosaccharide from growing alpha-1,4-glucan chains and the subsequent attachment of the oligosaccharide to the alpha-1,6 position. The chain is 1,4-alpha-glucan branching enzyme GlgB from Oleidesulfovibrio alaskensis (strain ATCC BAA-1058 / DSM 17464 / G20) (Desulfovibrio alaskensis).